The primary structure comprises 252 residues: MQYPVDTHTHTVASSHAYSTIHDYLAVAKQKGVRLFATTDHGPAMADAPHFWHFVNLRVLPRMVDGVGILRGIEANIKNRDGEIDYFGDYLSQLDIVLAGFHEPVFAPSDKVTHTEAMINTIRSGKVDIITHPGNPAYPIDIEAVVTAAAQYGVALEINNSSFEVSRKGSEANCTAIAKAAKALGATLVMGSDSHVAFSLGGFDRALSIIDAVDYPKDKLLNRSPMALLDFLTLRGHQTVADFIPHFRDEAI.

H8, H10, H16, H41, E74, H102, H132, D193, and H195 together coordinate Zn(2+).

Belongs to the PHP family. Requires Zn(2+) as cofactor.

This is Probable phosphatase SO_1652 from Shewanella oneidensis (strain ATCC 700550 / JCM 31522 / CIP 106686 / LMG 19005 / NCIMB 14063 / MR-1).